Here is a 314-residue protein sequence, read N- to C-terminus: Ribosomal RNA small subunit methyltransferase H (314 aa).

Residues glycine 35–histidine 37, aspartate 55, phenylalanine 79, aspartate 101, and glutamine 108 contribute to the S-adenosyl-L-methionine site. The interval glutamine 276–alanine 296 is disordered.

It belongs to the methyltransferase superfamily. RsmH family.

It localises to the cytoplasm. It catalyses the reaction cytidine(1402) in 16S rRNA + S-adenosyl-L-methionine = N(4)-methylcytidine(1402) in 16S rRNA + S-adenosyl-L-homocysteine + H(+). Functionally, specifically methylates the N4 position of cytidine in position 1402 (C1402) of 16S rRNA. This is Ribosomal RNA small subunit methyltransferase H from Pectobacterium atrosepticum (strain SCRI 1043 / ATCC BAA-672) (Erwinia carotovora subsp. atroseptica).